Here is a 506-residue protein sequence, read N- to C-terminus: 2-isopropylmalate synthase (506 aa).

Positions 4–266 (ILFMDTTLRD…EPSMTLKEIK (263 aa)) constitute a Pyruvate carboxyltransferase domain. The Mn(2+) site is built by Asp13, His201, His203, and Asn237. Residues 390–506 (NITQLQVHFV…KLKSFIQLVK (117 aa)) form a regulatory domain region.

Belongs to the alpha-IPM synthase/homocitrate synthase family. LeuA type 1 subfamily. Homodimer. It depends on Mn(2+) as a cofactor.

The protein resides in the cytoplasm. The enzyme catalyses 3-methyl-2-oxobutanoate + acetyl-CoA + H2O = (2S)-2-isopropylmalate + CoA + H(+). Its pathway is amino-acid biosynthesis; L-leucine biosynthesis; L-leucine from 3-methyl-2-oxobutanoate: step 1/4. Its function is as follows. Catalyzes the condensation of the acetyl group of acetyl-CoA with 3-methyl-2-oxobutanoate (2-ketoisovalerate) to form 3-carboxy-3-hydroxy-4-methylpentanoate (2-isopropylmalate). The chain is 2-isopropylmalate synthase from Bacillus cereus (strain ATCC 10987 / NRS 248).